Consider the following 569-residue polypeptide: Arginine--tRNA ligase (569 aa).

Residues 123–133 carry the 'HIGH' region motif; sequence ANPNGPLHVGH.

Belongs to the class-I aminoacyl-tRNA synthetase family.

It is found in the cytoplasm. The catalysed reaction is tRNA(Arg) + L-arginine + ATP = L-arginyl-tRNA(Arg) + AMP + diphosphate. The protein is Arginine--tRNA ligase of Methanosarcina mazei (strain ATCC BAA-159 / DSM 3647 / Goe1 / Go1 / JCM 11833 / OCM 88) (Methanosarcina frisia).